The primary structure comprises 232 residues: Ureidoacrylate amidohydrolase RutB (232 aa).

Asp-26 acts as the Proton acceptor in catalysis. Residue Lys-135 is part of the active site. Cys-168 serves as the catalytic Nucleophile.

This sequence belongs to the isochorismatase family. RutB subfamily.

The enzyme catalyses (Z)-3-ureidoacrylate + H2O + H(+) = (Z)-3-aminoacrylate + NH4(+) + CO2. It catalyses the reaction (Z)-3-ureidoacrylate + H2O = (Z)-3-aminoacrylate + carbamate + H(+). The catalysed reaction is (Z)-2-methylureidoacrylate + H2O + H(+) = (Z)-2-methylaminoacrylate + NH4(+) + CO2. In terms of biological role, hydrolyzes ureidoacrylate to form aminoacrylate and carbamate. The carbamate hydrolyzes spontaneously, thereby releasing one of the nitrogen atoms of the pyrimidine ring as ammonia and one of its carbon atoms as CO2. This chain is Ureidoacrylate amidohydrolase RutB, found in Cronobacter sakazakii (strain ATCC BAA-894) (Enterobacter sakazakii).